The sequence spans 123 residues: T-complex protein 1 subunit alpha (123 aa).

Gly-68 contributes to the ADP binding site.

This sequence belongs to the TCP-1 chaperonin family. Component of the chaperonin-containing T-complex (TRiC), a hexadecamer composed of two identical back-to-back stacked rings enclosing a protein folding chamber. Each ring is made up of eight different subunits: TCP1/CCT1, CCT2, CCT3, CCT4, CCT5, CCT6A/CCT6, CCT7, CCT8. Interacts with PACRG. Interacts with GBA1. Interacts with DLEC1.

The protein resides in the cytoplasm. Its subcellular location is the cytosol. The protein localises to the cytoskeleton. It localises to the microtubule organizing center. It is found in the centrosome. The enzyme catalyses ATP + H2O = ADP + phosphate + H(+). Component of the chaperonin-containing T-complex (TRiC), a molecular chaperone complex that assists the folding of actin, tubulin and other proteins upon ATP hydrolysis. The TRiC complex mediates the folding of WRAP53/TCAB1, thereby regulating telomere maintenance. As part of the TRiC complex may play a role in the assembly of BBSome, a complex involved in ciliogenesis regulating transports vesicles to the cilia. This chain is T-complex protein 1 subunit alpha, found in Mesocricetus auratus (Golden hamster).